Here is a 508-residue protein sequence, read N- to C-terminus: Light-independent protochlorophyllide reductase subunit B (508 aa).

Asp-36 serves as a coordination point for [4Fe-4S] cluster. Asp-294 acts as the Proton donor in catalysis. 429 to 430 (GM) contacts substrate.

This sequence belongs to the ChlB/BchB/BchZ family. Protochlorophyllide reductase is composed of three subunits; ChlL, ChlN and ChlB. Forms a heterotetramer of two ChlB and two ChlN subunits. The cofactor is [4Fe-4S] cluster.

The enzyme catalyses chlorophyllide a + oxidized 2[4Fe-4S]-[ferredoxin] + 2 ADP + 2 phosphate = protochlorophyllide a + reduced 2[4Fe-4S]-[ferredoxin] + 2 ATP + 2 H2O. The protein operates within porphyrin-containing compound metabolism; chlorophyll biosynthesis (light-independent). In terms of biological role, component of the dark-operative protochlorophyllide reductase (DPOR) that uses Mg-ATP and reduced ferredoxin to reduce ring D of protochlorophyllide (Pchlide) to form chlorophyllide a (Chlide). This reaction is light-independent. The NB-protein (ChlN-ChlB) is the catalytic component of the complex. The protein is Light-independent protochlorophyllide reductase subunit B of Rippkaea orientalis (strain PCC 8801 / RF-1) (Cyanothece sp. (strain PCC 8801)).